The chain runs to 299 residues: MALLKTSLDAPFTKIATGKVRDLYECVEFPDDLLFVATDRISAYDFIMENGIPEKGKVLTKISEFWFDVLKPHVQTHLITSRWEELPPVITKHEELKDRSMLVKKYKILPIEAIVRGYITGSAWKEYQKQGTVHGLNVPTGMKEAEAFPEPLFTPSTKAAEGHDENIHPDEVSKIVGPELAKQVAETSVKLYKIARDVALKKGIIIADTKFEFGVDETTNKIVLVDEVLTPDSSRFWLASDYTVGKSPDSFDKQYLRNWLTANNLANKPNVSLPEDVVEATRRKYVEAYEMITGKKWSY.

Belongs to the SAICAR synthetase family.

The enzyme catalyses 5-amino-1-(5-phospho-D-ribosyl)imidazole-4-carboxylate + L-aspartate + ATP = (2S)-2-[5-amino-1-(5-phospho-beta-D-ribosyl)imidazole-4-carboxamido]succinate + ADP + phosphate + 2 H(+). Its pathway is purine metabolism; IMP biosynthesis via de novo pathway; 5-amino-1-(5-phospho-D-ribosyl)imidazole-4-carboxamide from 5-amino-1-(5-phospho-D-ribosyl)imidazole-4-carboxylate: step 1/2. The protein is Phosphoribosylaminoimidazole-succinocarboxamide synthase (ade7) of Schizosaccharomyces pombe (strain 972 / ATCC 24843) (Fission yeast).